The primary structure comprises 453 residues: Tryptophan dimethylallyltransferase cnsF (453 aa).

Residues 84-85 (IL) and E93 contribute to the L-tryptophan site. Substrate contacts are provided by R104, K190, and Y192. Positions 194 and 248 each coordinate L-tryptophan. Residues R261, K263, Y265, Q347, and Y349 each contribute to the substrate site.

The protein belongs to the tryptophan dimethylallyltransferase family. As to quaternary structure, homodimer.

It catalyses the reaction L-tryptophan + dimethylallyl diphosphate = 4-(3-methylbut-2-enyl)-L-tryptophan + diphosphate. It functions in the pathway alkaloid biosynthesis. Its function is as follows. Tryptophan dimethylallyltransferase; part of the gene cluster that mediates the biosynthesis of communesins, a prominent class of indole alkaloids with great potential as pharmaceuticals. Communesins are biosynthesized by the coupling of tryptamine and aurantioclavine, two building blocks derived from L-tryptophan. The L-tryptophan decarboxylase cnsB converts L-tryptophan to tryptamine, whereas the tryptophan dimethylallyltransferase cnsF converts L-tryptophan to 4-dimethylallyl tryptophan which is further transformed to aurantioclavine by the aurantioclavine synthase cnsA, probably aided by the catalase cnsD. The cytochrome P450 monooxygenase cnsC catalyzes the heterodimeric coupling between the two different indole moieties, tryptamine and aurantioclavine, to construct vicinal quaternary stereocenters and yield the heptacyclic communesin scaffold. The O-methyltransferase cnsE then methylates the communesin scaffold to produce communesin K, the simplest characterized communesin that contains the heptacyclic core. The dioxygenase cnsJ converts communesin K into communesin I. Acylation to introduce the hexadienyl group at position N16 of communesin I by the acyltransferase cnsK leads to the production of communesin B. The hexadienyl group is produced by the highly reducing polyketide synthase cnsI, before being hydrolytically removed from cnsI by the serine hydrolase cnsH, converted into hexadienyl-CoA by the CoA ligase cnsG, and then transferred to communesin I by cnsK. Surprisingly, cnsK may also be a promiscuous acyltransferase that can tolerate a range of acyl groups, including acetyl-, propionyl-, and butyryl-CoA, which lead to communesins A, G and H respectively. The roles of the alpha-ketoglutarate-dependent dioxygenases cnsM and cnsP have still to be determined. This is Tryptophan dimethylallyltransferase cnsF from Penicillium expansum (Blue mold rot fungus).